The chain runs to 280 residues: Mevalonyl-coenzyme A hydratase SIDH (280 aa).

The PTS1-type peroxisomal targeting signal signature appears at 278 to 280 (SKL).

Belongs to the enoyl-CoA hydratase/isomerase family.

It is found in the peroxisome. It functions in the pathway siderophore biosynthesis. Its function is as follows. Mevalonyl-coenzyme A hydratase; part of the gene cluster that mediates the biosynthesis of at least 11 siderophores, including beauverichelin A, dimerumic acid (DA), Na-dimethyl coprogen (NADC), eleutherazine B, ferricrocin (FC), fusarinine A, fusarinine C (FsC), metachelin A, mevalonolactone, rhodotorulic acid (RA) and tenellin. This cocktail of siderophores for iron metabolism is essential for virulence, and more specifically for the fungal virulence in penetrating through the host cuticle. Siderophore synthesis is also involved in conidial germination under iron-deficient conditions. For biosynthesis of fusarinine C, the transacylase SIDF transfers anhydromevalonyl to N(5)-hydroxyornithine. The required anhydromevalonyl-CoA moiety is derived from mevalonate by CoA ligation and dehydration catalyzed by SIDI and sidH respectively. SIDH is not essential for siderophore production, probably due to functional redundancy of this protein family, as there are 15 homologs of SIDH in B.bassiana. The protein is Mevalonyl-coenzyme A hydratase SIDH of Beauveria bassiana (strain ARSEF 2860) (White muscardine disease fungus).